The following is a 317-amino-acid chain: tRNA(Ile)-lysidine synthase (317 aa).

30 to 35 provides a ligand contact to ATP; it reads SGGSDS.

The protein belongs to the tRNA(Ile)-lysidine synthase family.

The protein resides in the cytoplasm. The enzyme catalyses cytidine(34) in tRNA(Ile2) + L-lysine + ATP = lysidine(34) in tRNA(Ile2) + AMP + diphosphate + H(+). Its function is as follows. Ligates lysine onto the cytidine present at position 34 of the AUA codon-specific tRNA(Ile) that contains the anticodon CAU, in an ATP-dependent manner. Cytidine is converted to lysidine, thus changing the amino acid specificity of the tRNA from methionine to isoleucine. This is tRNA(Ile)-lysidine synthase from Chlamydia felis (strain Fe/C-56) (Chlamydophila felis).